Here is a 570-residue protein sequence, read N- to C-terminus: Adenine deaminase 2 (570 aa).

The protein belongs to the metallo-dependent hydrolases superfamily. Adenine deaminase family. It depends on Mn(2+) as a cofactor.

It carries out the reaction adenine + H2O + H(+) = hypoxanthine + NH4(+). This Carboxydothermus hydrogenoformans (strain ATCC BAA-161 / DSM 6008 / Z-2901) protein is Adenine deaminase 2.